We begin with the raw amino-acid sequence, 546 residues long: Chaperonin GroEL (546 aa).

Residues 30-33, K51, 87-91, G415, 479-481, and D495 each bind ATP; these read TLGP, DGTTT, and NAA.

The protein belongs to the chaperonin (HSP60) family. In terms of assembly, forms a cylinder of 14 subunits composed of two heptameric rings stacked back-to-back. Interacts with the co-chaperonin GroES.

The protein localises to the cytoplasm. The catalysed reaction is ATP + H2O + a folded polypeptide = ADP + phosphate + an unfolded polypeptide.. Together with its co-chaperonin GroES, plays an essential role in assisting protein folding. The GroEL-GroES system forms a nano-cage that allows encapsulation of the non-native substrate proteins and provides a physical environment optimized to promote and accelerate protein folding. This Allochromatium vinosum (Chromatium vinosum) protein is Chaperonin GroEL.